We begin with the raw amino-acid sequence, 196 residues long: Peptidyl-tRNA hydrolase (196 aa).

Tyrosine 18 contacts tRNA. The Proton acceptor role is filled by histidine 23. The tRNA site is built by phenylalanine 69, asparagine 71, and asparagine 117.

This sequence belongs to the PTH family. As to quaternary structure, monomer.

The protein localises to the cytoplasm. The enzyme catalyses an N-acyl-L-alpha-aminoacyl-tRNA + H2O = an N-acyl-L-amino acid + a tRNA + H(+). Hydrolyzes ribosome-free peptidyl-tRNAs (with 1 or more amino acids incorporated), which drop off the ribosome during protein synthesis, or as a result of ribosome stalling. In terms of biological role, catalyzes the release of premature peptidyl moieties from peptidyl-tRNA molecules trapped in stalled 50S ribosomal subunits, and thus maintains levels of free tRNAs and 50S ribosomes. The polypeptide is Peptidyl-tRNA hydrolase (Vibrio parahaemolyticus serotype O3:K6 (strain RIMD 2210633)).